The sequence spans 726 residues: Probable dipeptidyl-peptidase 5 (726 aa).

A signal peptide spans 1–19 (MGALQWLSITAAAASAVSA). N-linked (GlcNAc...) asparagine glycans are attached at residues N97, N153, N259, N398, N453, and N529. S564 serves as the catalytic Charge relay system. The N-linked (GlcNAc...) asparagine glycan is linked to N611. Active-site charge relay system residues include D647 and H679.

It belongs to the peptidase S9C family.

The protein resides in the secreted. Its function is as follows. Extracellular dipeptidyl-peptidase which removes N-terminal dipeptides sequentially from polypeptides having unsubstituted N-termini. The protein is Probable dipeptidyl-peptidase 5 (dpp5) of Aspergillus niger.